We begin with the raw amino-acid sequence, 320 residues long: Calnexin-independence factor 1 (320 aa).

Positions 16-36 (SAETSVGEKQPKRKRSEVRAE) are disordered.

It is found in the nucleus. Its subcellular location is the nucleolus. Functionally, induces a stably inheritable state of calnexin independence called the Cin state when overexpressed. This is Calnexin-independence factor 1 (cif1) from Schizosaccharomyces pombe (strain 972 / ATCC 24843) (Fission yeast).